A 384-amino-acid polypeptide reads, in one-letter code: MNPQFRNMVDGMDPHKFSYNFKNRPILSRRNTVWLCYEVKTKGPSRPPLDAKIFRGQVYFELKNHPEMRFFHWFSKWRKLHRDQECEVTWYMSWSPCTKCTRNVATFLAEDPKVTLTIFVARLYYFWDPDYQEALRSLCQERDGPRANMKIMNYDEFQHCWNKFVYSQRELFEPWNNLPKYYIVLHIILGEILRHSMDPLTFTSNFNNEPCVEGRHETYLCYKVERLHNDTWVLLNQRRGFLCNQAPAIHGFPEGRHAELCFLDVIPFWKLDGKQRYRVTCFTSWSPCFRCAQEMAKFISNNQHVSLCIFAARIYDDQGRCKEGLRTLDEAEAKISIMTYDEFQHCWDTFVDHQGRPFLPWIRLHEHSEALSGRLRAILLNQGN.

The tract at residues 1-60 is essential for cytoplasmic localization; sequence MNPQFRNMVDGMDPHKFSYNFKNRPILSRRNTVWLCYEVKTKGPSRPPLDAKIFRGQVYF. CMP/dCMP-type deaminase domains are found at residues 29 to 138 and 214 to 328; these read RRNT…LRSL and GRHE…LRTL. Position 32 is a phosphothreonine; by PKA (T32). Residues H65, C97, and C100 each contribute to the Zn(2+) site. The tract at residues 209 to 336 is necessary for homooligomerization; sequence EPCVEGRHET…TLDEAEAKIS (128 aa). Residues 213–215 are interaction with DNA; the sequence is EGR. T218 carries the post-translational modification Phosphothreonine; by PKA and CAMK2. H257 is a binding site for Zn(2+). E259 serves as the catalytic Proton donor. The Zn(2+) site is built by C288 and C291. The tract at residues 313-320 is interaction with DNA; sequence RIYDDQGR.

This sequence belongs to the cytidine and deoxycytidylate deaminase family. As to quaternary structure, homodimer. Zn(2+) is required as a cofactor.

It localises to the cytoplasm. The protein resides in the nucleus. Its subcellular location is the P-body. It catalyses the reaction a 2'-deoxycytidine in single-stranded DNA + H2O + H(+) = a 2'-deoxyuridine in single-stranded DNA + NH4(+). Functionally, DNA deaminase (cytidine deaminase) which acts as an inhibitor of retrovirus replication and retrotransposon mobility. After the penetration of retroviral nucleocapsids into target cells of infection and the initiation of reverse transcription, it can induce the conversion of cytosine to uracil in the minus-sense single-strand viral DNA, leading to G-to-A hypermutations in the subsequent plus-strand viral DNA. The resultant detrimental levels of mutations in the proviral genome, along with a deamination-independent mechanism that works prior to the proviral integration, together exert efficient antiretroviral effects in infected target cells. Selectively targets single-stranded DNA and does not deaminate double-stranded DNA or single- or double-stranded RNA. In Pongo pygmaeus (Bornean orangutan), this protein is DNA dC-&gt;dU-editing enzyme APOBEC-3G (APOBEC3G).